The chain runs to 440 residues: Chromosome partition protein MukF (440 aa).

The interval 208-236 is leucine-zipper; the sequence is LSETSGTLRELQDTLEAAGDKLQANLLRI.

It belongs to the MukF family. As to quaternary structure, interacts, and probably forms a ternary complex, with MukE and MukB via its C-terminal region. The complex formation is stimulated by calcium or magnesium. It is required for an interaction between MukE and MukB.

Its subcellular location is the cytoplasm. The protein resides in the nucleoid. Functionally, involved in chromosome condensation, segregation and cell cycle progression. May participate in facilitating chromosome segregation by condensation DNA from both sides of a centrally located replisome during cell division. Not required for mini-F plasmid partitioning. Probably acts via its interaction with MukB and MukE. Overexpression results in anucleate cells. It has a calcium binding activity. The sequence is that of Chromosome partition protein MukF from Shigella boydii serotype 18 (strain CDC 3083-94 / BS512).